An 85-amino-acid chain; its full sequence is Neutrophil elastase 2A (85 aa).

Residues 1–85 (IVGGRAAEPH…VAQGVFSFVR (85 aa)) enclose the Peptidase S1 domain. The active-site Charge relay system is the Ser67.

This sequence belongs to the peptidase S1 family. Elastase subfamily.

In terms of biological role, may be involved in the degradation of connective tissue in chronic lung disease. The polypeptide is Neutrophil elastase 2A (Equus caballus (Horse)).